The following is a 183-amino-acid chain: MSVRDIRLLGDPVLRTVADPVATFDRELRRLVDDLADTMRDAGGVGLAAPQLGVSLRIFTYLDDSDEVGHLINPVLGPFSEEMMDGEEGCLSLPGLAFDLRRPERVLAVGQNSHGDPVTVEGSGILSRCLQHETDHLDGILFIDRLDKETKRAAMKAIREAEWSNEPKPAVKVSPHPLFGRGR.

The Fe cation site is built by C90 and H132. Residue E133 is part of the active site. Fe cation is bound at residue H136.

This sequence belongs to the polypeptide deformylase family. The cofactor is Fe(2+).

The catalysed reaction is N-terminal N-formyl-L-methionyl-[peptide] + H2O = N-terminal L-methionyl-[peptide] + formate. Its function is as follows. Removes the formyl group from the N-terminal Met of newly synthesized proteins. Requires at least a dipeptide for an efficient rate of reaction. N-terminal L-methionine is a prerequisite for activity but the enzyme has broad specificity at other positions. The protein is Peptide deformylase of Parafrankia sp. (strain EAN1pec).